A 1343-amino-acid chain; its full sequence is Kinesin-like protein KIF7 (1343 aa).

The region spanning 15–349 (PVRVALRVRP…LNYASRAQNI (335 aa)) is the Kinesin motor domain. Residue 94 to 101 (GQTGSGKT) participates in ATP binding. 3 disordered regions span residues 356–382 (NWRPEAERPPEETASGARGPPRHRSET), 451–483 (RSALSSASGPDSGIESASVEDQAAQGAGGRKED), and 611–639 (EVNRLGSGSSAASEEEEEEEEPPRRTLHL). The tract at residues 358 to 479 (RPEAERPPEE…EDQAAQGAGG (122 aa)) is interaction with DLG5. Residues 358–1206 (RPEAERPPEE…LGRYMWINQE (849 aa)) are interaction with SMO. Residues 480 to 542 (RKEDEGAQQL…ELRLRLELVR (63 aa)) are a coiled coil. The sufficient for interaction with NPHP1 stretch occupies residues 513–775 (AMEQYKLQSD…LRELEGKELQ (263 aa)). Coiled coils occupy residues 698-1057 (ASEW…AAIE) and 1109-1211 (TLRE…KQKL). Phosphoserine is present on serine 898. Disordered stretches follow at residues 1219-1238 (HSRGGEKRSLCSEGRQAPGN) and 1310-1343 (GEAGLPWNFGPLSKPRRELRRASPGMIDVRKNPL).

This sequence belongs to the TRAFAC class myosin-kinesin ATPase superfamily. Kinesin family. KIF27 subfamily. Can form homodimers and interacts with microtubules. Interacts with GLI1, GLI2, GLI3, SMO and SUFU. Interacts with NPHP1. Interacts with SMO and DLG5 (via PDZ4 or guanylate kinase-like domain). Post-translationally, polyubiquitinated by UBR3. In terms of tissue distribution, embryonic stem cells, melanotic melanoma and Jurkat T-cells. Expressed in heart, lung, liver, kidney, testis, retina, placenta, pancreas, colon, small intestin, prostate and thymus.

The protein resides in the cell projection. Its subcellular location is the cilium. It localises to the cytoplasm. The protein localises to the cytoskeleton. It is found in the cilium basal body. In terms of biological role, essential for hedgehog signaling regulation: acts both as a negative and positive regulator of sonic hedgehog (Shh) and Indian hedgehog (Ihh) pathways, acting downstream of SMO, through both SUFU-dependent and -independent mechanisms. Involved in the regulation of microtubular dynamics. Required for proper organization of the ciliary tip and control of ciliary localization of SUFU-GLI2 complexes. Required for localization of GLI3 to cilia in response to Shh. Negatively regulates Shh signaling by preventing inappropriate activation of the transcriptional activator GLI2 in the absence of ligand. Positively regulates Shh signaling by preventing the processing of the transcription factor GLI3 into its repressor form. In keratinocytes, promotes the dissociation of SUFU-GLI2 complexes, GLI2 nuclear translocation and Shh signaling activation. Involved in the regulation of epidermal differentiation and chondrocyte development. The chain is Kinesin-like protein KIF7 (KIF7) from Homo sapiens (Human).